Here is a 349-residue protein sequence, read N- to C-terminus: Hypoxia-inducible factor 1-alpha inhibitor (349 aa).

Residues 1–10 (MAATAAEAVA) show a composition bias toward low complexity. The segment at 1–51 (MAATAAEAVASGSGEPREEAGALGPAWDESQLRSYSFPTRPIPRLSQSDPR) is disordered. The residue at position 2 (alanine 2) is an N-acetylalanine. Residues 2-125 (AATAAEAVAS…PRSNREEMKF (124 aa)) are interaction with VHL. The region spanning 142 to 312 (ERLYLQQTLN…PKRIEYPLKA (171 aa)) is the JmjC domain. 2-oxoglutarate is bound at residue tyrosine 145. Residues aspartate 152 and 181-183 (QLT) each bind substrate. Residue threonine 196 coordinates 2-oxoglutarate. Residues histidine 199 and aspartate 201 each contribute to the Fe cation site. A substrate-binding site is contributed by 201 to 203 (DEQ). 2-oxoglutarate-binding residues include asparagine 205 and lysine 214. Residue 238–239 (RQ) coordinates substrate. Histidine 279 lines the Fe cation pocket. Asparagine 294 serves as a coordination point for 2-oxoglutarate. Residues alanine 300 and asparagine 321 each contribute to the substrate site.

In terms of assembly, homodimer; homodimerization is essential for catalytic activity. Interacts with VHL and HIF1A. Part of a complex with VHL, HIF1A and HDAC1 or HDAC2 or HDAC3. Interacts with NFKB1 and NFKBIA. Interacts with NOTCH1, NOTCH2 and NOTCH3 but not with NOTCH4. Interacts with APBA3; binding inhibits HIF1AN binding to HIF1A. Interacts with TNKS2. Interacts with PPP1R12A. Interacts with ASB4. Interacts with UBE3A. Interacts with ANKS3. Interacts with NECAB3; the interaction is indirect and seems to be mediated by APBA3. The cofactor is Fe(2+).

The protein resides in the nucleus. Its subcellular location is the cytoplasm. It is found in the perinuclear region. It carries out the reaction L-asparaginyl-[hypoxia-inducible factor alpha subunit] + 2-oxoglutarate + O2 = (3S)-3-hydroxy-L-asparaginyl-[hypoxia-inducible factor alpha subunit] + succinate + CO2. It catalyses the reaction L-histidyl-[ankyrin-repeat domain protein] + 2-oxoglutarate + O2 = (3S)-3-hydroxy-L-histidyl-[ankyrin-repeat domain protein] + succinate + CO2. The enzyme catalyses L-asparaginyl-[ankyrin-repeat domain protein] + 2-oxoglutarate + O2 = (3S)-3-hydroxy-L-asparaginyl-[ankyrin-repeat domain protein] + succinate + CO2. The catalysed reaction is L-aspartyl-[ankyrin-repeat domain protein] + 2-oxoglutarate + O2 = (3S)-3-hydroxy-L-aspartyl-[ankyrin-repeat domain protein] + succinate + CO2. Its function is as follows. Hydroxylates HIF-1 alpha at 'Asn-803' in the C-terminal transactivation domain (CAD). Functions as an oxygen sensor and, under normoxic conditions, the hydroxylation prevents interaction of HIF-1 with transcriptional coactivators including Cbp/p300-interacting transactivator. Involved in transcriptional repression through interaction with HIF1A, VHL and histone deacetylases. Hydroxylates specific Asn residues within ankyrin repeat domains (ARD) of NFKB1, NFKBIA, NOTCH1, ASB4, PPP1R12A and several other ARD-containing proteins. Also hydroxylates Asp and His residues within ARDs of ANK1 and TNKS2, respectively. Negatively regulates NOTCH1 activity, accelerating myogenic differentiation. Positively regulates ASB4 activity, promoting vascular differentiation. This chain is Hypoxia-inducible factor 1-alpha inhibitor (HIF1AN), found in Homo sapiens (Human).